Reading from the N-terminus, the 311-residue chain is MHLKGRSMLTLLDFAEDEIKFIVDTALQMKRENYAGRRYWGLLEGRHLALLFEKPSTRTRVAFEVAASQLGMSVSYVTKSDSQLSRGEPLKDAARVLGRYVDAIAARVKRHEDLETLVEHSGVPVINALSDKFHPTQAIADVMTILEKLGRVRGVKIAFVGDGADNVAHSLALAATSLGADVRIVTAPGYEPLDAVIAAAEERARRSGGSFELVYDPCKGVKGADVVYTDVWVSMGLEAEREKRLRDLRPYQVNSELLKCVGKDYIFMHCLPAHRGEEVTEEVLESSRSVVWDQAENKLHAQRAVLALLVP.

Residues 56–59 (STRT), Gln-83, Arg-107, and 134–137 (HPTQ) contribute to the carbamoyl phosphate site. L-ornithine contacts are provided by residues Asn-166, Asp-230, and 234-235 (SM). Residues 270 to 271 (CL) and Lys-298 each bind carbamoyl phosphate.

Belongs to the aspartate/ornithine carbamoyltransferase superfamily. OTCase family.

The protein localises to the cytoplasm. It catalyses the reaction carbamoyl phosphate + L-ornithine = L-citrulline + phosphate + H(+). Its pathway is amino-acid degradation; L-arginine degradation via ADI pathway; carbamoyl phosphate from L-arginine: step 2/2. Reversibly catalyzes the transfer of the carbamoyl group from carbamoyl phosphate (CP) to the N(epsilon) atom of ornithine (ORN) to produce L-citrulline. The sequence is that of Ornithine carbamoyltransferase from Ignicoccus hospitalis (strain KIN4/I / DSM 18386 / JCM 14125).